The sequence spans 233 residues: Orotidine 5'-phosphate decarboxylase (233 aa).

Substrate is bound by residues D13, K35, 62 to 71 (DLKFHDIPNT), T122, R182, Q191, G211, and R212. K64 acts as the Proton donor in catalysis.

This sequence belongs to the OMP decarboxylase family. Type 1 subfamily. Homodimer.

The enzyme catalyses orotidine 5'-phosphate + H(+) = UMP + CO2. Its pathway is pyrimidine metabolism; UMP biosynthesis via de novo pathway; UMP from orotate: step 2/2. Its function is as follows. Catalyzes the decarboxylation of orotidine 5'-monophosphate (OMP) to uridine 5'-monophosphate (UMP). The sequence is that of Orotidine 5'-phosphate decarboxylase from Pseudomonas putida (strain ATCC 700007 / DSM 6899 / JCM 31910 / BCRC 17059 / LMG 24140 / F1).